Consider the following 110-residue polypeptide: UPF0339 protein YegP (110 aa).

Repeat copies occupy residues 10–58 and 61–109.

This sequence belongs to the UPF0339 family. Duplicated subfamily.

The protein is UPF0339 protein YegP (yegP) of Shigella flexneri.